A 535-amino-acid chain; its full sequence is Major glycerophosphoinositol permease GIT3 (535 aa).

Residues 49 to 69 (VVTSVKANSLWPAFASGAGLF) traverse the membrane as a helical segment. An N-linked (GlcNAc...) asparagine glycan is attached at Asn75. 5 helical membrane-spanning segments follow: residues 101–121 (NIAS…GYIS), 137–157 (LIFF…QGFF), 165–185 (FFLG…ASEF), 204–224 (AMID…IWIF), and 232–252 (LWRV…FMRL). N-linked (GlcNAc...) asparagine glycosylation occurs at Asn256. 6 helical membrane-spanning segments follow: residues 275–295 (WWLI…IWFI), 324–344 (WGWS…GAIS), 352–372 (LTLA…SACL), 378–398 (HIAG…FGPG), 419–439 (GIAA…FPAI), and 455–475 (VPFY…IFFC). Asn532 is a glycosylation site (N-linked (GlcNAc...) asparagine).

Belongs to the major facilitator superfamily. Sugar transporter (TC 2.A.1.1) family.

It is found in the cell membrane. It catalyses the reaction sn-glycerol 3-phosphocholine(out) = sn-glycerol 3-phosphocholine(in). Functionally, glycerophosphodiester transporter that mediates uptake of glycerophosphocholine (GroPCho) with GIT4. GIT3 acts as the major GroPCho permease. Does not possess detectable glycerophosphoinositol (GroPIns) transport activity. The expanded ability to utilize GroPIns and GroPCho results from the organism's pathogenic nature and its need to occupy a variety of environments within its host organism. This possibility is buttressed by the fact that GroPIns and GroPCho are present and abundant in human fluids. This is Major glycerophosphoinositol permease GIT3 from Candida albicans (strain SC5314 / ATCC MYA-2876) (Yeast).